The primary structure comprises 131 residues: ER membrane protein complex subunit 5 (131 aa).

Over 1-3 (MAP) the chain is Cytoplasmic. The chain crosses the membrane as a helical span at residues 4-22 (SLWKGLVGVGLFALAHAAF). The Lumenal portion of the chain corresponds to 23–43 (SAAQHRSYMRLTEKEDESLPI). The helical transmembrane segment at 44 to 63 (DIVLQTLLAFAVTCYGIVHI) threads the bilayer. The Cytoplasmic portion of the chain corresponds to 64–131 (AGEFKDMDAT…KLRKFDSLRR (68 aa)). Serine 120 is modified (phosphoserine).

This sequence belongs to the membrane magnesium transporter (TC 1.A.67) family. In terms of assembly, component of the ER membrane protein complex (EMC). Abundant in heart muscle and kidney with lower levels in liver and brain and very little expression in intestine or colon. In kidney, highest levels in distal convoluted tubule.

The protein localises to the endoplasmic reticulum membrane. It localises to the golgi apparatus membrane. It is found in the early endosome membrane. Part of the endoplasmic reticulum membrane protein complex (EMC) that enables the energy-independent insertion into endoplasmic reticulum membranes of newly synthesized membrane proteins. Preferentially accommodates proteins with transmembrane domains that are weakly hydrophobic or contain destabilizing features such as charged and aromatic residues. Involved in the cotranslational insertion of multi-pass membrane proteins in which stop-transfer membrane-anchor sequences become ER membrane spanning helices. It is also required for the post-translational insertion of tail-anchored/TA proteins in endoplasmic reticulum membranes. By mediating the proper cotranslational insertion of N-terminal transmembrane domains in an N-exo topology, with translocated N-terminus in the lumen of the ER, controls the topology of multi-pass membrane proteins like the G protein-coupled receptors. By regulating the insertion of various proteins in membranes, it is indirectly involved in many cellular processes. May be involved Mg(2+) transport. The protein is ER membrane protein complex subunit 5 of Mus musculus (Mouse).